The sequence spans 242 residues: uncharacterized protein (242 aa).

Positions 1 to 12 (MKLRRERFERRN) are enriched in basic and acidic residues. A disordered region spans residues 1–21 (MKLRRERFERRNGSGKNSQSS). Residues 1-23 (MKLRRERFERRNGSGKNSQSSSS) lie on the Cytoplasmic side of the membrane. Residues 24–44 (WMVTFTDLITLILVFFILLFS) form a helical membrane-spanning segment. Residues 45 to 242 (MSQIDLQKFK…VIKKSKTTSS (198 aa)) are Extracellular-facing. The interval 64-91 (GNGLQPDQTSIEKKNTSPSDTKKQEDQQ) is disordered. Residues 73–89 (SIEKKNTSPSDTKKQED) are compositionally biased toward basic and acidic residues. Positions 117-238 (ERGVVLVLQE…RVEIVIKKSK (122 aa)) constitute an OmpA-like domain.

Belongs to the MotB family.

It is found in the cell membrane. In terms of biological role, may be involved in some transport function. This is an uncharacterized protein from Bacillus subtilis (strain 168).